A 438-amino-acid chain; its full sequence is Coenzyme A disulfide reductase (438 aa).

An FAD-binding site is contributed by 8-33 (GAVAGGATCASQIRRLDKESDIIIFE). Substrate-binding residues include T15, Q19, R22, S39, and N42. C43 acts as the Nucleophile in catalysis. The active-site Redox-active is C43. K71 serves as a coordination point for substrate. NADP(+) is bound at residue 151-166 (VLVVGAGYVSLEVLEN). 267–277 (TNVPNIYAIGD) provides a ligand contact to FAD. Substrate is bound at residue H299. Y419 lines the FAD pocket. K427 contacts substrate.

The protein belongs to the class-III pyridine nucleotide-disulfide oxidoreductase family. Homodimer. FAD is required as a cofactor.

The enzyme catalyses NADP(+) + 2 CoA = CoA-disulfide + NADPH + H(+). Catalyzes specifically the NADPH-dependent reduction of coenzyme A disulfide. This chain is Coenzyme A disulfide reductase, found in Staphylococcus aureus (strain bovine RF122 / ET3-1).